We begin with the raw amino-acid sequence, 226 residues long: UPF0502 protein azo0627 (226 aa).

The protein belongs to the UPF0502 family.

The chain is UPF0502 protein azo0627 from Azoarcus sp. (strain BH72).